We begin with the raw amino-acid sequence, 152 residues long: Ubiquitin-conjugating enzyme E2 N (152 aa).

Residues 3–149 (GLPRRIIKET…ARAWTRLYAM (147 aa)) enclose the UBC core domain. Position 82 is an N6-acetyllysine (Lys-82). Catalysis depends on Cys-87, which acts as the Glycyl thioester intermediate. Lys-92 is covalently cross-linked (Glycyl lysine isopeptide (Lys-Gly) (interchain with G-Cter in ISG15)). The residue at position 131 (Ser-131) is a Phosphoserine.

It belongs to the ubiquitin-conjugating enzyme family. As to quaternary structure, heterodimer with UBE2V2. Interacts (UBE2V2-UBE2N heterodimer) with the E3 ligase STUB1 (via the U-box domain); the complex has a specific 'Lys-63'-linked polyubiquitination activity. Interacts with RNF8 and RNF168. Interacts with RNF11. Interacts with the E3 ligases, HLTF and SHPRH; the interactions promote the 'Lys-63'-linked polyubiquitination of PCNA upon genotoxic stress and lead to DNA repair. Interacts with ARIH2 (via RING-type 2). Interacts with OTUB1; leading to inhibit E2-conjugating activity. Interacts with GPS2; leading to inhibit E2-conjugating activity. Interacts with RIGI and RNF135; involved in RIGI ubiquitination and activation. In terms of processing, conjugation to ISG15 impairs formation of the thioester bond with ubiquitin but not interaction with UBE2V2.

It catalyses the reaction S-ubiquitinyl-[E1 ubiquitin-activating enzyme]-L-cysteine + [E2 ubiquitin-conjugating enzyme]-L-cysteine = [E1 ubiquitin-activating enzyme]-L-cysteine + S-ubiquitinyl-[E2 ubiquitin-conjugating enzyme]-L-cysteine.. It participates in protein modification; protein ubiquitination. Its activity is regulated as follows. Activity is inhibited by binding to OTUB1, which prevents 'Lys-63'-linked polyubiquitination. Activity is inhibited by GPS2, leading to prevent 'Lys-63'-linked polyubiquitination. Functionally, the UBE2V1-UBE2N and UBE2V2-UBE2N heterodimers catalyze the synthesis of non-canonical 'Lys-63'-linked polyubiquitin chains. This type of polyubiquitination does not lead to protein degradation by the proteasome. Mediates transcriptional activation of target genes. Plays a role in the control of progress through the cell cycle and differentiation. Plays a role in the error-free DNA repair pathway and contributes to the survival of cells after DNA damage. Acts together with the E3 ligases, HLTF and SHPRH, in the 'Lys-63'-linked poly-ubiquitination of PCNA upon genotoxic stress, which is required for DNA repair. Appears to act together with E3 ligase RNF5 in the 'Lys-63'-linked polyubiquitination of JKAMP thereby regulating JKAMP function by decreasing its association with components of the proteasome and ERAD. Promotes TRIM5 capsid-specific restriction activity and the UBE2V1-UBE2N heterodimer acts in concert with TRIM5 to generate 'Lys-63'-linked polyubiquitin chains which activate the MAP3K7/TAK1 complex which in turn results in the induction and expression of NF-kappa-B and MAPK-responsive inflammatory genes. Together with RNF135 and UB2V1, catalyzes the viral RNA-dependent 'Lys-63'-linked polyubiquitination of RIGI to activate the downstream signaling pathway that leads to interferon beta production. UBE2V1-UBE2N together with TRAF3IP2 E3 ubiquitin ligase mediate 'Lys-63'-linked polyubiquitination of TRAF6, a component of IL17A-mediated signaling pathway. The protein is Ubiquitin-conjugating enzyme E2 N (Ube2n) of Rattus norvegicus (Rat).